The chain runs to 763 residues: Phosphoglycerol transferase I (763 aa).

The next 4 membrane-spanning stretches (helical) occupy residues 1–21 (MSELLSFALFLASVLIYAWKA), 26–46 (WWFAATLTVLGLFVVLNITLF), 77–97 (ILPGIGIVLGLTAVFGALGWI), and 108–128 (FGYSLLALLLALGSVDASPAF).

The protein belongs to the OpgB family.

The protein resides in the cell inner membrane. The enzyme catalyses a phosphatidylglycerol + a membrane-derived-oligosaccharide D-glucose = a 1,2-diacyl-sn-glycerol + a membrane-derived-oligosaccharide 6-(glycerophospho)-D-glucose.. The protein operates within glycan metabolism; osmoregulated periplasmic glucan (OPG) biosynthesis. In terms of biological role, transfers a phosphoglycerol residue from phosphatidylglycerol to the membrane-bound nascent glucan backbones. The protein is Phosphoglycerol transferase I of Escherichia coli (strain SMS-3-5 / SECEC).